A 616-amino-acid polypeptide reads, in one-letter code: Glutamine--fructose-6-phosphate aminotransferase [isomerizing] (616 aa).

Cysteine 2 functions as the Nucleophile; for GATase activity in the catalytic mechanism. Residues 2–221 (CGIVGYVGTD…QDQIVTITPE (220 aa)) form the Glutamine amidotransferase type-2 domain. 2 SIS domains span residues 288–428 (LGDE…VRGT) and 461–606 (LAHW…VDQP). The active-site For Fru-6P isomerization activity is lysine 611.

In terms of assembly, homodimer.

Its subcellular location is the cytoplasm. The catalysed reaction is D-fructose 6-phosphate + L-glutamine = D-glucosamine 6-phosphate + L-glutamate. Catalyzes the first step in hexosamine metabolism, converting fructose-6P into glucosamine-6P using glutamine as a nitrogen source. In Leifsonia xyli subsp. xyli (strain CTCB07), this protein is Glutamine--fructose-6-phosphate aminotransferase [isomerizing].